A 517-amino-acid polypeptide reads, in one-letter code: MGDPSKQDILTIFKRLRSVPTNKVCFDCGAKNPSWASITYGVFLCIDCSGSHRSLGVHLSFIRSTELDSNWSWFQLRCMQVGGNANASSFFHQHGCDTNDTNAKYNSRAAQLYRERIKALASQATRKHGTDLWLDSCVVPPSSPPPKEEDFFASHASPEVSSTGWASAQPEPSLTPRNVDAPAASSEGVPEQGPSVEGLNVPTKAAVGEVSSIIKKKPNQAKRGLGAKKGSLGAQKLSNTCFNEIEKQAQAVDKMNAQEDLLSRAAPKEESIVSSLRLAYKDLEIQMKKDEKMNMSGKKKAESERLGMGFGNSRSGISHSVTSDMQTIEQETPITAKPRKKYGDDSDDSYFTSSSRFFDEPMELRSSSFSSWDDSSDSYWKKETIKDTDPIPKNTGYTDRPTTRRKPDSEPAENTDEAQKKFGNVKAISSDMYFGRQAKADYEARARLERLSASSSISSADLFDEQRKQTAGSYNLTSVLPTAPDMAQFKQGVRSVAGKLSVFANGVMTSIQDRYGS.

Positions 10–126 (LTIFKRLRSV…IKALASQATR (117 aa)) constitute an Arf-GAP domain. The C4-type zinc finger occupies 25–48 (CFDCGAKNPSWASITYGVFLCIDC). Positions 139–200 (VPPSSPPPKE…EQGPSVEGLN (62 aa)) are disordered. Over residues 159-176 (EVSSTGWASAQPEPSLTP) the composition is skewed to polar residues. Residue Ser-231 is modified to Phosphoserine. Residues 243–263 (NEIEKQAQAVDKMNAQEDLLS) adopt a coiled-coil conformation. A phosphoserine mark is found at Ser-271 and Ser-275. Residues 291–305 (EKMNMSGKKKAESER) are compositionally biased toward basic and acidic residues. Disordered stretches follow at residues 291–349 (EKMN…SDDS) and 362–422 (MELR…QKKF). Residues 312-333 (NSRSGISHSVTSDMQTIEQETP) are compositionally biased toward polar residues. Position 371 is a phosphoserine (Ser-371). Over residues 379-390 (YWKKETIKDTDP) the composition is skewed to basic and acidic residues. Phosphoserine is present on residues Ser-429, Ser-452, Ser-454, Ser-456, Ser-458, and Ser-459.

It is found in the cytoplasm. The protein resides in the golgi apparatus membrane. With respect to regulation, GAP activity stimulated by phosphatidylinositol 4,5-bisphosphate (PIP2). Functionally, GTPase-activating protein (GAP) for ADP ribosylation factor 1 (ARF1). Hydrolysis of ARF1-bound GTP may lead to dissociation of coatomer from Golgi-derived membranes to allow fusion with target membranes. In Bos taurus (Bovine), this protein is ADP-ribosylation factor GTPase-activating protein 3.